Consider the following 481-residue polypeptide: Glutamate--glyoxylate aminotransferase 2 (481 aa).

K291 is subject to N6-(pyridoxal phosphate)lysine. A Peroxisomal targeting signal motif is present at residues 479–481; it reads SRM.

Belongs to the class-I pyridoxal-phosphate-dependent aminotransferase family. Alanine aminotransferase subfamily. Homodimer. Pyridoxal 5'-phosphate serves as cofactor. The N-terminus is blocked. In terms of tissue distribution, expressed at low levels in seedlings, leaves, flowers, roots, and green siliques.

The protein resides in the peroxisome. It carries out the reaction L-alanine + 2-oxoglutarate = pyruvate + L-glutamate. The catalysed reaction is glyoxylate + L-alanine = glycine + pyruvate. The enzyme catalyses glycine + 2-oxoglutarate = glyoxylate + L-glutamate. It functions in the pathway photosynthesis; C4 acid pathway. It participates in amino-acid degradation; L-alanine degradation via transaminase pathway; pyruvate from L-alanine: step 1/1. Functionally, catalyzes the Glu:glyoxylate aminotransferase (GGT), Ala:glyoxylate aminotransferase (AGT), Ala:2-oxoglutarate aminotransferase (AKT) and Glu:pyruvate aminotransferase (GPT) reactions in peroxisomes. This chain is Glutamate--glyoxylate aminotransferase 2 (GGAT2), found in Arabidopsis thaliana (Mouse-ear cress).